Here is a 514-residue protein sequence, read N- to C-terminus: MDKFQRDGKEYTSRQRRFLYPFLFKEDLYAIAIDHYFNRSSSFEPMENSSSNDRFSFLTVKRSISRMRQQNGSIVPFVNCNQKKLVGYNRSFYSELVLGGLTAVPEVPFSIRSKHSLEGMNEWTSFRSINSIFPLMEDKIPHSNFILDIRIPHLTHPEILVRTFRRWIQDAPFLHSLRFVLHEHRNLIISSNLDQLILIASKENTRLSLFLWNSYAYECESLLVPLWKRFSHSRSLPYESFVERTPFCRKIEHIIIFSHKYLKKSLWFLKDPSIHYVKYRERSIIALRGTYLLVKKWRYHLTNFWQCHFHLWLQPYRIYIDELSNNCFSFLGYLLSVKMNTSVVRIKMLDDSFITDLITKEFDPIAPTTLLIGSLAKEKFCDISGHPISRLAWTGLTDDDILDRFDRIWRNIFHYYSGSSKKDGLYRMKYILRLPCAKTLACKHKSAIRVVRERFGSELFTKSFPKERESIFLSFSKTRSQRERIWHSDIIQRNPLVNSWWKKHNFQIEPLFDR.

It belongs to the intron maturase 2 family. MatK subfamily.

It localises to the plastid. Its subcellular location is the chloroplast. Usually encoded in the trnK tRNA gene intron. Probably assists in splicing its own and other chloroplast group II introns. In Zamia integrifolia (Coontie), this protein is Maturase K.